Here is a 656-residue protein sequence, read N- to C-terminus: MIKDYNDYKKAVDTLKKWAYYYYVLDNPLVTDEEYDKLYHEVEEYEKKHPDKIDPTSPTQRVGDVVLEGFEKAKHLSRMWSMEDVFNEKDFLDWVGRVKRILGHENFSFYIEPKFDGASLNLIYENGKLIRAETRGDGEIGEDVTLNAKTINSIPLEIKEKSLIEIRGEVVIKKDDFDKLNEERLKNGEPTFANPRNAAAGSLRQLDPKITAKRPLIFYPWGVGVNSLNYERYSELMDYIYSLGFKEPPKRGVCKDIPCVEKKYDEFVKLRDSFEVMLDGMVVKIDEIKYHDILGYTQKYPRWMVAYKFPAIEKETIIEDVIVQVGRTGVLTPVAVLKPVEIGGVIVERATLHNFDEIERMDIRIGDHVIVIRSGDVIPKITKVLTWKRKGDEKPIPRPTHCPVCGAEVLDEGALIKCQNLSCPARVVNTIIYFASKNCLDIEGLGESVAKLLYEHGLVKDVTDLFELKVEDLEKLPLFARKKAENLVNAIKSKVGVECWRFVNALGIEHIGEVASKKICEKFGVEFYKHAPEEFEEIEGFGPEMVKSIAEYIRVNKEKIEKLIEILKPKNPEKKEVQKTPFTGKTVVLTGTMSKPRSEIKKMLEDMGAKVSSSVSKKTDFVIYGEDAGSKYDKAKKLGVNLLSEDDMWKMLKEGK.

Residues 32–36 (DEEYD), 81–82 (SM), and Glu112 contribute to the NAD(+) site. The N6-AMP-lysine intermediate role is filled by Lys114. Residues Arg135, Glu169, Lys284, and Lys308 each coordinate NAD(+). Zn(2+)-binding residues include Cys402, Cys405, Cys418, and Cys423. A BRCT domain is found at 577–656 (VQKTPFTGKT…DMWKMLKEGK (80 aa)).

Belongs to the NAD-dependent DNA ligase family. LigA subfamily. Mg(2+) is required as a cofactor. It depends on Mn(2+) as a cofactor.

The catalysed reaction is NAD(+) + (deoxyribonucleotide)n-3'-hydroxyl + 5'-phospho-(deoxyribonucleotide)m = (deoxyribonucleotide)n+m + AMP + beta-nicotinamide D-nucleotide.. In terms of biological role, DNA ligase that catalyzes the formation of phosphodiester linkages between 5'-phosphoryl and 3'-hydroxyl groups in double-stranded DNA using NAD as a coenzyme and as the energy source for the reaction. It is essential for DNA replication and repair of damaged DNA. This is DNA ligase from Nautilia profundicola (strain ATCC BAA-1463 / DSM 18972 / AmH).